A 386-amino-acid chain; its full sequence is S-adenosylmethionine synthase (386 aa).

An ATP-binding site is contributed by H17. D19 contributes to the Mg(2+) binding site. A K(+)-binding site is contributed by E45. E58 and Q101 together coordinate L-methionine. Residues 101–111 are flexible loop; sequence QSPDISQGVTE. ATP contacts are provided by residues 168-170, D242, 248-249, A265, and K269; these read DAK and RK. D242 is an L-methionine binding site. K273 is an L-methionine binding site.

It belongs to the AdoMet synthase family. Homotetramer; dimer of dimers. The cofactor is Mg(2+). K(+) serves as cofactor.

The protein resides in the cytoplasm. The catalysed reaction is L-methionine + ATP + H2O = S-adenosyl-L-methionine + phosphate + diphosphate. It participates in amino-acid biosynthesis; S-adenosyl-L-methionine biosynthesis; S-adenosyl-L-methionine from L-methionine: step 1/1. Functionally, catalyzes the formation of S-adenosylmethionine (AdoMet) from methionine and ATP. The overall synthetic reaction is composed of two sequential steps, AdoMet formation and the subsequent tripolyphosphate hydrolysis which occurs prior to release of AdoMet from the enzyme. This chain is S-adenosylmethionine synthase, found in Leptospira interrogans serogroup Icterohaemorrhagiae serovar copenhageni (strain Fiocruz L1-130).